The following is a 146-amino-acid chain: Aminoglycoside N(6')-acetyltransferase type 1 (146 aa).

An N-acetyltransferase domain is found at 1-146 (MNIMPVSESL…RVVYFKKHIG (146 aa)). The substrate site is built by W22, H25, Y66, and E79. 81 to 83 (IYV) contacts acetyl-CoA. Residue D115 coordinates substrate. N120 is a binding site for acetyl-CoA. E136 contributes to the substrate binding site.

Homodimer.

The enzyme catalyses kanamycin B + acetyl-CoA = N(6')-acetylkanamycin B + CoA + H(+). Catalyzes the transfer of an acetyl group from acetyl-CoA to the 6'-amino group of aminoglycoside molecules conferring resistance to antibiotics containing the purpurosamine ring including amikacin, kanamycin, tobramycin and netilmicin. The chain is Aminoglycoside N(6')-acetyltransferase type 1 from Acinetobacter genomosp. 13.